The chain runs to 348 residues: Anthranilate phosphoribosyltransferase (348 aa).

5-phospho-alpha-D-ribose 1-diphosphate contacts are provided by residues G81, 84-85 (GD), 91-94 (NVST), 109-117 (KHGNRAVSG), and S121. G81 is an anthranilate binding site. A Mg(2+)-binding site is contributed by S93. N112 provides a ligand contact to anthranilate. Residue R167 coordinates anthranilate. Mg(2+)-binding residues include D226 and E227.

The protein belongs to the anthranilate phosphoribosyltransferase family. As to quaternary structure, homodimer. Requires Mg(2+) as cofactor.

It carries out the reaction N-(5-phospho-beta-D-ribosyl)anthranilate + diphosphate = 5-phospho-alpha-D-ribose 1-diphosphate + anthranilate. It functions in the pathway amino-acid biosynthesis; L-tryptophan biosynthesis; L-tryptophan from chorismate: step 2/5. Functionally, catalyzes the transfer of the phosphoribosyl group of 5-phosphorylribose-1-pyrophosphate (PRPP) to anthranilate to yield N-(5'-phosphoribosyl)-anthranilate (PRA). The chain is Anthranilate phosphoribosyltransferase from Azotobacter vinelandii (strain DJ / ATCC BAA-1303).